The sequence spans 358 residues: Phosphoserine aminotransferase (358 aa).

R41 lines the L-glutamate pocket. Pyridoxal 5'-phosphate is bound by residues 75 to 76, W100, T148, D167, and Q190; that span reads AS. Position 191 is an N6-(pyridoxal phosphate)lysine (K191). Residue 233 to 234 coordinates pyridoxal 5'-phosphate; the sequence is NT.

This sequence belongs to the class-V pyridoxal-phosphate-dependent aminotransferase family. SerC subfamily. Homodimer. It depends on pyridoxal 5'-phosphate as a cofactor.

It is found in the cytoplasm. It carries out the reaction O-phospho-L-serine + 2-oxoglutarate = 3-phosphooxypyruvate + L-glutamate. The catalysed reaction is 4-(phosphooxy)-L-threonine + 2-oxoglutarate = (R)-3-hydroxy-2-oxo-4-phosphooxybutanoate + L-glutamate. Its pathway is amino-acid biosynthesis; L-serine biosynthesis; L-serine from 3-phospho-D-glycerate: step 2/3. The protein operates within cofactor biosynthesis; pyridoxine 5'-phosphate biosynthesis; pyridoxine 5'-phosphate from D-erythrose 4-phosphate: step 3/5. Its function is as follows. Catalyzes the reversible conversion of 3-phosphohydroxypyruvate to phosphoserine and of 3-hydroxy-2-oxo-4-phosphonooxybutanoate to phosphohydroxythreonine. In Campylobacter jejuni (strain RM1221), this protein is Phosphoserine aminotransferase.